The following is a 171-amino-acid chain: Regulator of ribonuclease activity A (171 aa).

It belongs to the RraA family. As to quaternary structure, homotrimer. Binds to both RNA-binding sites in the C-terminal region of Rne and to RhlB.

The protein resides in the cytoplasm. Its function is as follows. Globally modulates RNA abundance by binding to RNase E (Rne) and regulating its endonucleolytic activity. Can modulate Rne action in a substrate-dependent manner by altering the composition of the degradosome. Modulates RNA-binding and helicase activities of the degradosome. The sequence is that of Regulator of ribonuclease activity A from Vibrio cholerae serotype O1 (strain ATCC 39315 / El Tor Inaba N16961).